The sequence spans 408 residues: Peptidase T (408 aa).

H78 is a Zn(2+) binding site. D80 is a catalytic residue. D140 contributes to the Zn(2+) binding site. The active-site Proton acceptor is E173. Positions 174, 196, and 379 each coordinate Zn(2+).

This sequence belongs to the peptidase M20B family. Zn(2+) is required as a cofactor.

The protein resides in the cytoplasm. The catalysed reaction is Release of the N-terminal residue from a tripeptide.. In terms of biological role, cleaves the N-terminal amino acid of tripeptides. This chain is Peptidase T, found in Escherichia coli (strain UTI89 / UPEC).